Consider the following 250-residue polypeptide: Galectin-3 (250 aa).

The segment at 1 to 60 (MADNFSLHDALSGSGNPNPQGWPGAWGNQPAGAGGYPGASYPGAYPGQAPPGAYPGQAPP) is disordered. Position 2 is an N-acetylalanine (Ala2). 2 positions are modified to phosphoserine: Ser6 and Ser12. 3 repeat units span residues 36 to 44 (YPGASYPGA), 45 to 53 (YPGQAPPGA), and 54 to 62 (YPGQAPPGA). The tract at residues 36–109 (YPGASYPGAY…AYPATGPYGA (74 aa)) is 8 X 9 AA tandem repeats of Y-P-G-X(3)-P-G-A. Over residues 38-47 (GASYPGAYPG) the composition is skewed to low complexity. Over residues 48–60 (QAPPGAYPGQAPP) the composition is skewed to pro residues. The 4; approximate repeat unit spans residues 63-69 (YPGAPGA). Repeat unit 5 spans residues 70-78 (YPGAPAPGV). A 6; approximate repeat occupies 79–88 (YPGPPSGPGA). The stretch at 89 to 100 (YPSSGQPSATGA) is one 7; approximate repeat. Residues 101–109 (YPATGPYGA) form an 8; approximate repeat. Positions 118 to 248 (YNLPLPGGVV…DIDLTSASYT (131 aa)) constitute a Galectin domain. An a beta-D-galactoside-binding site is contributed by 181–187 (WGREERQ). The residue at position 188 (Ser188) is a Phosphoserine. Residues 226–241 (KKLNEISKLGISGDID) carry the Nuclear export signal motif.

In terms of assembly, probably forms homo- or heterodimers. Interacts with DMBT1. Interacts with CD6 and ALCAM. Forms a complex with the ITGA3, ITGB1 and CSPG4. Interacts with LGALS3BP, LYPD3, ZFTRAF1 and UACA. Interacts with TRIM16; this interaction mediates autophagy of damage endomembranes. Interacts with cargo receptor TMED10; the interaction mediates the translocation from the cytoplasm into the ERGIC (endoplasmic reticulum-Golgi intermediate compartment) and thereby secretion. A major expression is found in the colonic epithelium. It is also abundant in the activated macrophages. Expressed in fetal membranes.

It is found in the cytoplasm. It localises to the nucleus. Its subcellular location is the secreted. Galactose-specific lectin which binds IgE. May mediate with the alpha-3, beta-1 integrin the stimulation by CSPG4 of endothelial cells migration. Together with DMBT1, required for terminal differentiation of columnar epithelial cells during early embryogenesis. In the nucleus: acts as a pre-mRNA splicing factor. Involved in acute inflammatory responses including neutrophil activation and adhesion, chemoattraction of monocytes macrophages, opsonization of apoptotic neutrophils, and activation of mast cells. Together with TRIM16, coordinates the recognition of membrane damage with mobilization of the core autophagy regulators ATG16L1 and BECN1 in response to damaged endomembranes. The protein is Galectin-3 of Homo sapiens (Human).